A 365-amino-acid chain; its full sequence is tRNA N6-adenosine threonylcarbamoyltransferase (365 aa).

The Fe cation site is built by His-119 and His-123. Substrate-binding positions include 141–145 (LVSGG), Asp-174, Gly-187, and Asn-288. Asp-316 lines the Fe cation pocket.

Belongs to the KAE1 / TsaD family. Fe(2+) is required as a cofactor.

It is found in the cytoplasm. The enzyme catalyses L-threonylcarbamoyladenylate + adenosine(37) in tRNA = N(6)-L-threonylcarbamoyladenosine(37) in tRNA + AMP + H(+). Its function is as follows. Required for the formation of a threonylcarbamoyl group on adenosine at position 37 (t(6)A37) in tRNAs that read codons beginning with adenine. Is involved in the transfer of the threonylcarbamoyl moiety of threonylcarbamoyl-AMP (TC-AMP) to the N6 group of A37, together with TsaE and TsaB. TsaD likely plays a direct catalytic role in this reaction. The polypeptide is tRNA N6-adenosine threonylcarbamoyltransferase (Agrobacterium fabrum (strain C58 / ATCC 33970) (Agrobacterium tumefaciens (strain C58))).